The sequence spans 354 residues: Glutamine synthetase (354 aa).

A GS beta-grasp domain is found at 22-101; the sequence is VQAEYVWIDG…VLAETFNNDG (80 aa). The GS catalytic domain maps to 108 to 354; it reads HRHHTKKVMD…IIVETTVLDK (247 aa).

The protein belongs to the glutamine synthetase family. In terms of assembly, homooctamer.

The protein localises to the cytoplasm. It carries out the reaction L-glutamate + NH4(+) + ATP = L-glutamine + ADP + phosphate + H(+). The sequence is that of Glutamine synthetase (GLNA) from Suillus bovinus (Jersey cow bolete).